We begin with the raw amino-acid sequence, 681 residues long: Auxin response factor 8 (681 aa).

Positions 120–222 form a DNA-binding region, TF-B3; the sequence is FAKTLTQSDA…DLHVGIRRAK (103 aa). Disordered stretches follow at residues 474-518 and 534-577; these read LRRP…AKPP and SLSG…TSSE. 2 stretches are compositionally biased toward polar residues: residues 534-555 and 564-577; these read SLSG…NTEK and GVIQ…TSSE. Residues 595–675 enclose the PB1 domain; sequence PGQCKVFIES…RRLTILTDAG (81 aa).

The protein belongs to the ARF family. In terms of assembly, homodimers and heterodimers. Expressed in roots, culms, leaves and young panicles.

The protein localises to the nucleus. Its function is as follows. Auxin response factors (ARFs) are transcriptional factors that bind specifically to the DNA sequence 5'-TGTCTC-3' found in the auxin-responsive promoter elements (AuxREs). The chain is Auxin response factor 8 (ARF8) from Oryza sativa subsp. japonica (Rice).